Here is a 284-residue protein sequence, read N- to C-terminus: Stomatin (284 aa).

Residues 1 to 31 (MSDKRQSSHVQSQRIPESFRENSKTELGACG) lie on the Cytoplasmic side of the membrane. S18 carries the phosphoserine modification. C30 carries the S-palmitoyl cysteine lipid modification. Residues 32-52 (WILVAASFFFVIITFPISIWI) lie within the membrane without spanning it. Residues 53 to 284 (CIKIVKEYER…MLQGIMGSNH (232 aa)) lie on the Cytoplasmic side of the membrane. C87 carries S-palmitoyl cysteine lipidation. 2 positions are modified to phosphoserine: S161 and S244. The tract at residues 265 to 273 (STIVFPLPV) is required for homooligomerization. Positions 267 to 269 (IVF) are required for lipid raft association. The tract at residues 273 to 284 (VDMLQGIMGSNH) is interaction with LANCL1.

It belongs to the band 7/mec-2 family. In terms of assembly, interacts with LANCL1. Interacts with SLC2A1. Interacts with SLC4A1; this interaction positively regulates SLC4A1 activity. Identified in large complexes with SLC40A1, SLC14A1, SLC29A1 and AQP1. Homodimer and higher order homooligomers. The homodimer is banana-shaped. Interacts with ASIC1, ASIC2 and ASIC3. Interacts with STOML1; may redistribute STOM from the plasma membrane to late endosomes. As to expression, expressed in all sensory neurons of the dorsal root ganglia. In the CNS, expressed in many neurons of the spinal cord, medulla and pons. Expressed only in scattered neurons in the cortex, hippocampus, thalamus and basal ganglia. In the cerebellum, expressed in all Purkinje cells (at protein level). Widely expressed with high levels in heart, liver, skeletal muscle and testis and low levels in lung, brain and spleen.

Its subcellular location is the cell membrane. The protein resides in the cytoplasm. It localises to the cytoskeleton. The protein localises to the membrane raft. It is found in the melanosome. Its subcellular location is the cytoplasmic vesicle. Regulates ion channel activity and transmembrane ion transport. Regulates ASIC2 and ASIC3 channel activity. The sequence is that of Stomatin from Mus musculus (Mouse).